The sequence spans 290 residues: Ribonuclease HIII (290 aa).

One can recognise an RNase H type-2 domain in the interval 78–290 (LPLIGTDEVG…FKNTEKAKNA (213 aa)). Residues aspartate 84, glutamate 85, and aspartate 187 each contribute to the a divalent metal cation site.

This sequence belongs to the RNase HII family. RnhC subfamily. Mn(2+) serves as cofactor. It depends on Mg(2+) as a cofactor.

Its subcellular location is the cytoplasm. The catalysed reaction is Endonucleolytic cleavage to 5'-phosphomonoester.. Functionally, endonuclease that specifically degrades the RNA of RNA-DNA hybrids. This is Ribonuclease HIII from Streptococcus pneumoniae serotype 2 (strain D39 / NCTC 7466).